Reading from the N-terminus, the 514-residue chain is Cholesterol side-chain cleavage enzyme, mitochondrial (514 aa).

A mitochondrion-targeting transit peptide spans Ser1–Arg39. Cys461 lines the heme pocket.

Belongs to the cytochrome P450 family. The cofactor is heme.

It is found in the mitochondrion inner membrane. It carries out the reaction 6 reduced [adrenodoxin] + cholesterol + 3 O2 + 6 H(+) = 4-methylpentanal + pregnenolone + 6 oxidized [adrenodoxin] + 4 H2O. Its pathway is lipid metabolism; C21-steroid hormone metabolism. Catalyzes the side-chain cleavage reaction of cholesterol to pregnenolone, the precursor of most steroid hormones. The chain is Cholesterol side-chain cleavage enzyme, mitochondrial (CYP11A1) from Hypanus americanus (Southern stingray).